A 357-amino-acid chain; its full sequence is D-alanine--D-alanine ligase (357 aa).

The 206-residue stretch at 134 to 339 (KQLFEHRGLP…YPDLIAKLID (206 aa)) folds into the ATP-grasp domain. 167–222 (NDKLTYPVFVKPANLGSSVGISKCNNEEELKSGIAEAFQFDRKLVIEQGINAREIE) provides a ligand contact to ATP. 3 residues coordinate Mg(2+): aspartate 293, glutamate 306, and asparagine 308.

Belongs to the D-alanine--D-alanine ligase family. The cofactor is Mg(2+). Mn(2+) serves as cofactor.

Its subcellular location is the cytoplasm. The enzyme catalyses 2 D-alanine + ATP = D-alanyl-D-alanine + ADP + phosphate + H(+). It functions in the pathway cell wall biogenesis; peptidoglycan biosynthesis. In terms of biological role, cell wall formation. The polypeptide is D-alanine--D-alanine ligase (Staphylococcus epidermidis (strain ATCC 35984 / DSM 28319 / BCRC 17069 / CCUG 31568 / BM 3577 / RP62A)).